The chain runs to 89 residues: Small ribosomal subunit protein uS15 (89 aa).

This sequence belongs to the universal ribosomal protein uS15 family. Part of the 30S ribosomal subunit. Forms a bridge to the 50S subunit in the 70S ribosome, contacting the 23S rRNA.

One of the primary rRNA binding proteins, it binds directly to 16S rRNA where it helps nucleate assembly of the platform of the 30S subunit by binding and bridging several RNA helices of the 16S rRNA. Functionally, forms an intersubunit bridge (bridge B4) with the 23S rRNA of the 50S subunit in the ribosome. The chain is Small ribosomal subunit protein uS15 from Shewanella frigidimarina (strain NCIMB 400).